A 1507-amino-acid chain; its full sequence is Histone-lysine N-methyltransferase set-2 (1507 aa).

The tract at residues 1–32 (MSTHDMNHHPPRKSHSKRDKPSSSNSGPKIEN) is disordered. Basic residues predominate over residues 9–18 (HPPRKSHSKR). One can recognise an RRM domain in the interval 128–199 (VSLFNMDDNC…QNLLATKCTP (72 aa)). 5 disordered regions span residues 280 to 578 (DYTM…QPQM), 650 to 697 (EPFS…EEPA), 803 to 826 (DEEK…SNHL), 842 to 1058 (SSRG…GPII), and 1163 to 1199 (QKPR…FKPR). Residues 296-315 (PIPPPPIKEESPPPPPPPPV) are compositionally biased toward pro residues. The segment covering 316–327 (ASVSNLAPVPSV) has biased composition (low complexity). Over residues 331–342 (YYNNIQPSSSTM) the composition is skewed to polar residues. Over residues 413-444 (VKYETYKMEKRKIKYEGGNKKYEQVHIKERTA) the composition is skewed to basic and acidic residues. The span at 456–465 (SSESASGSSS) shows a compositional bias: low complexity. Positions 478–488 (KKKKRPKSPNR) are enriched in basic residues. Over residues 566-575 (HLQTPYQHVQ) the composition is skewed to polar residues. Basic and acidic residues-rich tracts occupy residues 668–680 (DVGR…KPSL) and 803–823 (DEEK…EKPS). Over residues 846 to 868 (FYRKQKPIPKSHPKHQEHHHHAK) the composition is skewed to basic residues. Positions 869–908 (ASVSTPVHSSSTSRNSSVAPTPQRTVSTSSSSSSAATSAR) are enriched in low complexity. The segment covering 941–951 (SFSSTSIQSSP) has biased composition (polar residues). The span at 958–971 (SSSSRTSSSSSTSS) shows a compositional bias: low complexity. Basic and acidic residues predominate over residues 973–982 (KQEETADEKS). Over residues 990 to 1007 (SSDESSTTGSTATSVVSS) the composition is skewed to low complexity. A compositionally biased stretch (basic and acidic residues) spans 1015-1047 (QQEKTDGEPPKKKSQTDFISERVSKIEGEERPL). The span at 1179 to 1190 (EPPPTKRPAPPP) shows a compositional bias: pro residues. Residues 1340–1345 (RLLQRR) carry the RxxxRR motif motif. One can recognise an SET domain in the interval 1368-1485 (KMIKFARSRI…KGEEITYDYK (118 aa)). Tyr-1484 contacts S-adenosyl-L-methionine. Residues 1491–1507 (DKIDCLCGAKTCRGYLN) form the Post-SET domain.

This sequence belongs to the class V-like SAM-binding methyltransferase superfamily. As to quaternary structure, component of the Set1C/COMPASS complex (also known as the SET2 complex), which contains at least set-2, swd-2.1, cfp-1, rbbp-5, wdr-5.1, dpy-30 and ash-2. Expressed in all cells of embryo. In L1 larva, it is predominantly expressed in Z2 and Z3 primordial germ cells. In adults, it is predominantly expressed in the germline.

It is found in the nucleus. It carries out the reaction L-lysyl(4)-[histone H3] + 3 S-adenosyl-L-methionine = N(6),N(6),N(6)-trimethyl-L-lysyl(4)-[histone H3] + 3 S-adenosyl-L-homocysteine + 3 H(+). It catalyses the reaction N(6)-methyl-L-lysyl(4)-[histone H3] + S-adenosyl-L-methionine = N(6),N(6)-dimethyl-L-lysyl(4)-[histone H3] + S-adenosyl-L-homocysteine + H(+). The enzyme catalyses N(6),N(6)-dimethyl-L-lysyl(4)-[histone H3] + S-adenosyl-L-methionine = N(6),N(6),N(6)-trimethyl-L-lysyl(4)-[histone H3] + S-adenosyl-L-homocysteine + H(+). In terms of biological role, catalytic component of the COMPASS (Set1C) complex that specifically mono-, di- and trimethylates histone H3 to form H3K4me1/2/3. Binds RNAs which might negatively affect its histone methyltransferase activity. COMPASS recognizes ubiquitinated H2B on one face of the nucleosome which stimulates the methylation of H3 on the opposing face. H3 'Lys-4' methylation represents a specific tag for epigenetic transcriptional activation. Implicated in the epigenetic inheritance of lifespan over several generations. Acts in the germline to limit the longevity of the soma, probably by regulating a lipid metabolism pathway that signals from the germline to the intestine, thereby preventing accumulation of mono-unsaturated fatty acids. Methylation in the germline is required for germline development and fertility, possibly by ensuring genome stability. May act redundantly with mes-3 and mes-4 proteins in the development of a fertile germline. Required for RNAi. Functions as an antagonist of hpl-1 and hpl-2 activity in growth and somatic gonad development. Cooperates with jmjd-3.1 and egl-27 to ensure robust transdifferentiation of the Y rectal cell to the PDA motor neuron during larval development. The polypeptide is Histone-lysine N-methyltransferase set-2 (set-2) (Caenorhabditis elegans).